The sequence spans 644 residues: Type III restriction-modification enzyme EcoP15I Mod subunit (644 aa).

The segment at 123–126 is binding of S-adenosyl methionine; that stretch reads DPPY.

This sequence belongs to the N(4)/N(6)-methyltransferase family. As to quaternary structure, forms a homodimer capable of methylating the target sequence in the absence of Res. A heterotetramer with stoichiometry Res(2)Mod(2). A heterotrimer with stoichiometry Res(1)Mod(2).

It catalyses the reaction a 2'-deoxyadenosine in DNA + S-adenosyl-L-methionine = an N(6)-methyl-2'-deoxyadenosine in DNA + S-adenosyl-L-homocysteine + H(+). Its function is as follows. A beta subtype methylase that binds the system-specific DNA recognition site 5'-CAGCAG-3' and methylates A-5 (of only 1 strand as the other does not have an A residue). DNA restriction requires both the Res and Mod subunits. The A-5 nucleotide flips into the catalytic pocket of one Mod subunit for modification, while the other Mod subunit makes most of the DNA sequence-specific contacts. In Escherichia coli, this protein is Type III restriction-modification enzyme EcoP15I Mod subunit.